An 83-amino-acid polypeptide reads, in one-letter code: Small ribosomal subunit protein bS16 (83 aa).

Belongs to the bacterial ribosomal protein bS16 family.

The sequence is that of Small ribosomal subunit protein bS16 from Shewanella denitrificans (strain OS217 / ATCC BAA-1090 / DSM 15013).